A 285-amino-acid polypeptide reads, in one-letter code: Diphthine methyl ester synthase (285 aa).

Residues L9, D84, G87, 112-113 (SI), and L163 each bind S-adenosyl-L-methionine. S171 carries the phosphoserine modification. S-adenosyl-L-methionine is bound by residues V225 and H250.

Belongs to the diphthine synthase family.

It carries out the reaction 2-[(3S)-amino-3-carboxypropyl]-L-histidyl-[translation elongation factor 2] + 4 S-adenosyl-L-methionine = diphthine methyl ester-[translation elongation factor 2] + 4 S-adenosyl-L-homocysteine + 3 H(+). It functions in the pathway protein modification; peptidyl-diphthamide biosynthesis. Its function is as follows. S-adenosyl-L-methionine-dependent methyltransferase that catalyzes four methylations of the modified target histidine residue in translation elongation factor 2 (EF-2), to form an intermediate called diphthine methyl ester. The four successive methylation reactions represent the second step of diphthamide biosynthesis. The polypeptide is Diphthine methyl ester synthase (DPH5) (Bos taurus (Bovine)).